Here is a 209-residue protein sequence, read N- to C-terminus: Thiamine-phosphate synthase (209 aa).

4-amino-2-methyl-5-(diphosphooxymethyl)pyrimidine-binding positions include 41–45 and Asn-73; that span reads QLREK. Residues Asp-74 and Asp-93 each contribute to the Mg(2+) site. Ser-112 is a binding site for 4-amino-2-methyl-5-(diphosphooxymethyl)pyrimidine. Position 138–140 (138–140) interacts with 2-[(2R,5Z)-2-carboxy-4-methylthiazol-5(2H)-ylidene]ethyl phosphate; the sequence is TGT. A 4-amino-2-methyl-5-(diphosphooxymethyl)pyrimidine-binding site is contributed by Lys-141. 2-[(2R,5Z)-2-carboxy-4-methylthiazol-5(2H)-ylidene]ethyl phosphate is bound by residues Gly-168 and 188 to 189; that span reads VS.

It belongs to the thiamine-phosphate synthase family. The cofactor is Mg(2+).

The enzyme catalyses 2-[(2R,5Z)-2-carboxy-4-methylthiazol-5(2H)-ylidene]ethyl phosphate + 4-amino-2-methyl-5-(diphosphooxymethyl)pyrimidine + 2 H(+) = thiamine phosphate + CO2 + diphosphate. It catalyses the reaction 2-(2-carboxy-4-methylthiazol-5-yl)ethyl phosphate + 4-amino-2-methyl-5-(diphosphooxymethyl)pyrimidine + 2 H(+) = thiamine phosphate + CO2 + diphosphate. The catalysed reaction is 4-methyl-5-(2-phosphooxyethyl)-thiazole + 4-amino-2-methyl-5-(diphosphooxymethyl)pyrimidine + H(+) = thiamine phosphate + diphosphate. It participates in cofactor biosynthesis; thiamine diphosphate biosynthesis; thiamine phosphate from 4-amino-2-methyl-5-diphosphomethylpyrimidine and 4-methyl-5-(2-phosphoethyl)-thiazole: step 1/1. Condenses 4-methyl-5-(beta-hydroxyethyl)thiazole monophosphate (THZ-P) and 2-methyl-4-amino-5-hydroxymethyl pyrimidine pyrophosphate (HMP-PP) to form thiamine monophosphate (TMP). In Alkaliphilus oremlandii (strain OhILAs) (Clostridium oremlandii (strain OhILAs)), this protein is Thiamine-phosphate synthase.